A 173-amino-acid polypeptide reads, in one-letter code: MRFLLLAAFVAYAYAKSDEEIRKDALSALDVVPLGSTPEKLENGREFYKYFFTNHQDLRKYFKGAETFTADDIAKSDRFKKLGNQLLLSVHLAADTYDNEMIFRAFVRDTIDRHVDRGLDPKLWKEFWSIYQKFLESKGKTLSADQKAAFDAIGTRFNDEAQKQLAHHGLPHT.

The signal sequence occupies residues 1–15; that stretch reads MRFLLLAAFVAYAYA. Residues 25-166 form the Globin domain; the sequence is ALSALDVVPL…FNDEAQKQLA (142 aa). Histidine 114 serves as a coordination point for heme b.

This sequence belongs to the globin family.

It localises to the secreted. The protein localises to the extracellular space. In terms of biological role, may be a globin and may play a role in oxygen transport. The chain is Globin-like host-protective antigen from Trichostrongylus colubriformis (Black scour worm).